Consider the following 384-residue polypeptide: Chaperone protein DnaJ (384 aa).

The region spanning 5–70 is the J domain; sequence DFYQVLGVSK…QKRQMYDQYG (66 aa). The segment at 138–216 adopts a CR-type zinc-finger fold; sequence GKTVELEIPT…CHGHGRKEET (79 aa). The Zn(2+) site is built by cysteine 151, cysteine 154, cysteine 168, cysteine 171, cysteine 190, cysteine 193, cysteine 204, and cysteine 207. CXXCXGXG motif repeat units follow at residues 151-158, 168-175, 190-197, and 204-211; these read CRDCNGSG, CGHCHGSG, CPQCRGTG, and CRTCHGHG.

This sequence belongs to the DnaJ family. As to quaternary structure, homodimer. Zn(2+) serves as cofactor.

It is found in the cytoplasm. In terms of biological role, participates actively in the response to hyperosmotic and heat shock by preventing the aggregation of stress-denatured proteins and by disaggregating proteins, also in an autonomous, DnaK-independent fashion. Unfolded proteins bind initially to DnaJ; upon interaction with the DnaJ-bound protein, DnaK hydrolyzes its bound ATP, resulting in the formation of a stable complex. GrpE releases ADP from DnaK; ATP binding to DnaK triggers the release of the substrate protein, thus completing the reaction cycle. Several rounds of ATP-dependent interactions between DnaJ, DnaK and GrpE are required for fully efficient folding. Also involved, together with DnaK and GrpE, in the DNA replication of plasmids through activation of initiation proteins. In Idiomarina loihiensis (strain ATCC BAA-735 / DSM 15497 / L2-TR), this protein is Chaperone protein DnaJ.